Consider the following 453-residue polypeptide: Anthocyanidin 3-O-glucosyltransferase (453 aa).

The active-site Proton acceptor is the histidine 17. Histidine 17 lines the an anthocyanidin pocket. Residue aspartate 117 is the Charge relay of the active site. Residue threonine 139 coordinates UDP-alpha-D-glucose. An anthocyanidin is bound at residue histidine 148. UDP-alpha-D-glucose contacts are provided by alanine 331, glutamine 333, histidine 348, tryptophan 351, asparagine 352, serine 353, and glutamate 356. Glycine 371 provides a ligand contact to an anthocyanidin. UDP-alpha-D-glucose contacts are provided by aspartate 372 and glutamine 373.

The protein belongs to the UDP-glycosyltransferase family.

The enzyme catalyses an anthocyanidin + UDP-alpha-D-glucose + H(+) = an anthocyanidin 3-O-beta-D-glucoside + UDP. It carries out the reaction delphinidin + UDP-alpha-D-glucose = delphinidin 3-O-beta-D-glucoside + UDP. It catalyses the reaction pelargonidin + UDP-alpha-D-glucose = pelargonidin 3-O-beta-D-glucoside + UDP. The catalysed reaction is cyanidin + UDP-alpha-D-glucose = cyanidin 3-O-beta-D-glucoside + UDP + H(+). The protein operates within pigment biosynthesis; anthocyanin biosynthesis. In the presence of other necessary color factors, this glycosylation reaction allows the accumulation of anthocyanin pigments. Anthocyanidins are the preferred substrates, while flavonols are only a minor substrate in vitro. The protein is Anthocyanidin 3-O-glucosyltransferase of Gentiana triflora (Clustered gentian).